We begin with the raw amino-acid sequence, 559 residues long: S-layer protein (559 aa).

The N-terminal stretch at 1–28 (MAMSLKKIGAIAVGGAMVASALASGVMA) is a signal peptide. 5 N-linked (GlcNAc...) asparagine glycosylation sites follow: asparagine 108, asparagine 130, asparagine 155, asparagine 222, and asparagine 373.

The protein belongs to the Mj S-layer protein family.

It is found in the secreted. The protein localises to the cell wall. The protein resides in the S-layer. S-layer protein. The S-layer is a paracrystalline mono-layered assembly of proteins which coat the surface of the cell. This Methanothermococcus thermolithotrophicus (Methanococcus thermolithotrophicus) protein is S-layer protein.